The primary structure comprises 300 residues: MITDKTECNNPLFGRILTAMVTPFTENGDVDYELAIKLSNYLFENGSDGIVLCGTTGESPTLSWAEQHELFIAVKGSLDASCKVIVGTGSNCTSEAVEATKKAYDSGADGALVVVPYYNKPPQEGLYKHFSSIAKSAKDLPLMLYNIPGRTGCNLLPDTVKKLMDFSNILSIKAASGRIEEVTELRAICGSELSVYSGDDSLLLPMLSVGAVGVVSVASHLVGLQLKEMIYSFQSGKVSNALAIHEKLQPLFKALFMTTNPIPIKAALELSGWDVGNPRSPLSPLTNDMKKQLSFILKSL.

Threonine 56 contacts pyruvate. Tyrosine 145 (proton donor/acceptor) is an active-site residue. The active-site Schiff-base intermediate with substrate is lysine 173. Valine 215 provides a ligand contact to pyruvate.

This sequence belongs to the DapA family. In terms of assembly, homotetramer; dimer of dimers.

Its subcellular location is the cytoplasm. It catalyses the reaction L-aspartate 4-semialdehyde + pyruvate = (2S,4S)-4-hydroxy-2,3,4,5-tetrahydrodipicolinate + H2O + H(+). Its pathway is amino-acid biosynthesis; L-lysine biosynthesis via DAP pathway; (S)-tetrahydrodipicolinate from L-aspartate: step 3/4. In terms of biological role, catalyzes the condensation of (S)-aspartate-beta-semialdehyde [(S)-ASA] and pyruvate to 4-hydroxy-tetrahydrodipicolinate (HTPA). The sequence is that of 4-hydroxy-tetrahydrodipicolinate synthase from Prochlorococcus marinus (strain MIT 9301).